A 137-amino-acid polypeptide reads, in one-letter code: Large ribosomal subunit protein uL16 (137 aa).

It belongs to the universal ribosomal protein uL16 family. In terms of assembly, part of the 50S ribosomal subunit.

Its function is as follows. Binds 23S rRNA and is also seen to make contacts with the A and possibly P site tRNAs. The sequence is that of Large ribosomal subunit protein uL16 from Acinetobacter baumannii (strain AB307-0294).